Consider the following 496-residue polypeptide: MFNTPTPDSENTYDAILVGAGIMSSTLAVLLHELEPDLRLLVVEKLSSAGLESSCAKNNAGTGHAANCELNYTPIQEDGHLSTNKAFEINKSFEQSLEFWASLAEKGKLIPKTFLNKLPHISLVFGDEDISLLKKRFSKLSSHAAFAEMEFTMDHGELKDWVPLIMDGRQHSEKIAATRIKRGTDIDFGNLTRSYINQIEGAKSIDINYSTNVENLQQDSEGDWYLSLEGAKNNRIVRSKFVFLGAGGGALSLLQKSRIPEGLLYAGFPVSGKWLICDEEKSTKTHNAKVYGKAAVGAPPMSVPHLDTRWIDKKKSLLFGPFAGFSSNFLKYGSKLDLFRSIKTTNLFSMLQAGLDNIDLGKYLLNQLIQTNEDRIDTLKRFLPQVSPNDWKLSTAGQRVQIIKQTSKGGVLKMGTEVVTSSDGSLAALLGASPGASTAVTIMIEVLNRCWLEKMKSSKWKNKMLELFPSIGTDINSDQEALLAIRKRNDFLLKLI.

It belongs to the MQO family. It depends on FAD as a cofactor.

It carries out the reaction (S)-malate + a quinone = a quinol + oxaloacetate. It functions in the pathway carbohydrate metabolism; tricarboxylic acid cycle; oxaloacetate from (S)-malate (quinone route): step 1/1. The sequence is that of Probable malate:quinone oxidoreductase from Prochlorococcus marinus (strain NATL1A).